The sequence spans 430 residues: MAASTGKLRTLFSAHSSLSARPSSALPALRLTILRSYATTTPPDSSISDPSNSSTTVKRPPTAFKDKLNAGPAFSDFVSGKKDEPLDPAEAYALKTALVGPAGRKKEITRLPSWLKTPIPDSSNYKRIKNDLRGLNLHTVCEEARCPNISDCWGGSSKSAATATIMLMGDTCTRGCRFCSVKTSNKPPPLDPHEPENTAEALSRWGLGYVVLTSVDRDDLADGGARHFAETVLKIKQKAPNILVECLTGDYAGDLEMVALVANSGLDVYAHNVETVEALTPFVRDRRATFQQSLRVLKAAKATKPELITKTSLMLGLGETEAQLWDTLRALRAIDVDVVTFGQYMRPTKRHMAVHEYVRPDVFDMWKERALEMGFLYCASGPLVRSSYKAGEAFIENVLKKKRGKNVGSASGKGTTSENVEKLVAGEAVR.

The transit peptide at 1-37 (MAASTGKLRTLFSAHSSLSARPSSALPALRLTILRSY) directs the protein to the mitochondrion. The segment covering 40-56 (TTPPDSSISDPSNSSTT) has biased composition (low complexity). The interval 40 to 63 (TTPPDSSISDPSNSSTTVKRPPTA) is disordered. Cys-141, Cys-146, Cys-152, Cys-172, Cys-176, Cys-179, and Ser-387 together coordinate [4Fe-4S] cluster. A Radical SAM core domain is found at 155-376 (GSSKSAATAT…KERALEMGFL (222 aa)).

Belongs to the radical SAM superfamily. Lipoyl synthase family. [4Fe-4S] cluster serves as cofactor.

The protein resides in the mitochondrion. The enzyme catalyses [[Fe-S] cluster scaffold protein carrying a second [4Fe-4S](2+) cluster] + N(6)-octanoyl-L-lysyl-[protein] + 2 oxidized [2Fe-2S]-[ferredoxin] + 2 S-adenosyl-L-methionine + 4 H(+) = [[Fe-S] cluster scaffold protein] + N(6)-[(R)-dihydrolipoyl]-L-lysyl-[protein] + 4 Fe(3+) + 2 hydrogen sulfide + 2 5'-deoxyadenosine + 2 L-methionine + 2 reduced [2Fe-2S]-[ferredoxin]. The protein operates within protein modification; protein lipoylation via endogenous pathway; protein N(6)-(lipoyl)lysine from octanoyl-[acyl-carrier-protein]: step 2/2. In terms of biological role, catalyzes the radical-mediated insertion of two sulfur atoms into the C-6 and C-8 positions of the octanoyl moiety bound to the lipoyl domains of lipoate-dependent enzymes, thereby converting the octanoylated domains into lipoylated derivatives. The polypeptide is Lipoyl synthase, mitochondrial (Ajellomyces dermatitidis (strain ER-3 / ATCC MYA-2586) (Blastomyces dermatitidis)).